Consider the following 648-residue polypeptide: Threonine--tRNA ligase (648 aa).

A TGS domain is found at Met1–Thr61. The segment at Asp240 to Pro539 is catalytic. The Zn(2+) site is built by Cys335, His386, and His516.

It belongs to the class-II aminoacyl-tRNA synthetase family. Homodimer. Requires Zn(2+) as cofactor.

The protein resides in the cytoplasm. It carries out the reaction tRNA(Thr) + L-threonine + ATP = L-threonyl-tRNA(Thr) + AMP + diphosphate + H(+). In terms of biological role, catalyzes the attachment of threonine to tRNA(Thr) in a two-step reaction: L-threonine is first activated by ATP to form Thr-AMP and then transferred to the acceptor end of tRNA(Thr). Also edits incorrectly charged L-seryl-tRNA(Thr). This chain is Threonine--tRNA ligase, found in Flavobacterium johnsoniae (strain ATCC 17061 / DSM 2064 / JCM 8514 / BCRC 14874 / CCUG 350202 / NBRC 14942 / NCIMB 11054 / UW101) (Cytophaga johnsonae).